We begin with the raw amino-acid sequence, 376 residues long: MRIGFLSHAGASIYHFRMPIIKALKDRKDEVFVIVPQDEYTQKLRDLGLKVIVYEFSRASLNPFVVLKNFFYLAKVLKNLNLDFIQSAAHKSNTFGILAAKWAKIPYRFALVEGLGSFYIDQGFKANLVRFVINSLYKLSFKFAHQFIFVNESNAEFMRNLGLKENKICVIKSVGINLKKFFPIYVESEKKELFWKNLNIDKKPIVLMIARALWHKGVKEFYESATMLKDKANFVLVGGRDENPSCASLEFLNSGAVHYLGARSDIVELLQNCDIFVLPSYKEGFPVSVLEAKACGKAIVVSDCEGCVEAISNAYDGLWAKTKNAKDLSEKISLLLEDEKLRLNLAKNAAQDALQYDENIIAQRYLKLYDRVIKNV.

This sequence belongs to the glycosyltransferase group 1 family.

The catalysed reaction is N,N'-diacetyl-alpha-D-bacillosaminyl-tri-trans,hepta-cis-undecaprenyl diphosphate + UDP-N-acetyl-alpha-D-galactosamine = N-acetyl-alpha-D-galactosaminyl-(1-&gt;3)-N,N'-diacetyl-alpha-D-bacillosaminyl-tri-trans,hepta-cis-undecaprenyl diphosphate + UDP + H(+). The protein operates within protein modification; protein glycosylation. In terms of biological role, adds the first GalNAc residue on to the isoprenoid-linked bacillosamine (2,4-diacetamido-2,4,6-trideoxyglucose) carrier in the N-linked protein glycosylation pathway. Acts first on the undecaprenylpyrophosphate-linked bacillosamine (Und-PP-Bac) substrate to yield the disaccharide. The protein is N,N'-diacetylbacillosaminyl-diphospho-undecaprenol alpha-1,3-N-acetylgalactosaminyltransferase (pglA) of Campylobacter jejuni subsp. jejuni serotype O:2 (strain ATCC 700819 / NCTC 11168).